Reading from the N-terminus, the 453-residue chain is MISQFFILSSKGDPLIYKDFRGDSGGRDVAELFYRKLTGLPGGESPVVMYHDDRHFIHIRHSGLYLVATTSENVSPFSLLELLSRLATLLGDYCGSLNEGTISRNVALVYELLDEVLDYGYVQTTSTDMLRNFIQTEAAVSKPFSLFDLSSVGLFGAETQQNRVAPSSAASRPVLSSRSDQSQKNEVFLDVVERLSVLIASNGSLLKVDVQGEIRLKSFLPSSSEICIGLTEEFCVGKSELRGYGPGIRVDEVSFHSSVNLDEFESHRILHLQPPQGELTVMRYQLSDDLPSPLPFRLFPSVQWDQGSGRLQVYLKLRCDLPPKSQALNIHLHLPLPRGVVSLSQELSSPDQKAELGEGALHWDLPRVQGGSQLSGLFQMDVPGLQGPPSRGPSPSAPPLGLGPASLSFELPRHTCSGLQVRFLRLSFSACGNANPHKWVRHLSHSNAYVIRI.

In terms of domain architecture, MHD spans 184–452 (KNEVFLDVVE…LSHSNAYVIR (269 aa)). Residues 383-403 (PGLQGPPSRGPSPSAPPLGLG) are disordered.

This sequence belongs to the adaptor complexes medium subunit family. As to quaternary structure, adaptor protein complex 4 (AP-4) is a heterotetramer composed of two large adaptins (epsilon-type subunit AP4E1 and beta-type subunit AP4B1), a medium adaptin (mu-type subunit AP4M1) and a small adaptin (sigma-type AP4S1). Interacts with tyrosine-based sorting signals on the cytoplasmic tail of cargo proteins such as APP, ATG9A, LAMP2 and NAGPA. Interacts with the C-terminal domain of GRID2. Interacts with GRIA1 and GRIA2; the interaction is indirect via CACNG3. Interacts with CACNG3; CACNG3 associates GRIA1 and GRIA2 with the adaptor protein complex 4 (AP-4) to target them to the somatodendritic compartment of neurons. Interacts with HOOK1 and HOOK2; the interactions are direct, mediate the interaction between FTS-Hook-FHIP (FHF) complex and AP-4 and the perinuclear distribution of AP-4. High levels in the olfactory bulb, the cerebral cortex, the granule and Purkinje cell layers of the cerebellar cortex and the CA3 region of the hippocampus. Low levels found in molecular layer of cerebellum.

The protein resides in the golgi apparatus. Its subcellular location is the trans-Golgi network membrane. It localises to the early endosome. In terms of biological role, component of the adaptor protein complex 4 (AP-4). Adaptor protein complexes are vesicle coat components involved both in vesicle formation and cargo selection. They control the vesicular transport of proteins in different trafficking pathways. AP-4 forms a non clathrin-associated coat on vesicles departing the trans-Golgi network (TGN) and may be involved in the targeting of proteins from the trans-Golgi network (TGN) to the endosomal-lysosomal system. It is also involved in protein sorting to the basolateral membrane in epithelial cells and the proper asymmetric localization of somatodendritic proteins in neurons. Within AP-4, the mu-type subunit AP4M1 is directly involved in the recognition and binding of tyrosine-based sorting signals found in the cytoplasmic part of cargos. The adaptor protein complex 4 (AP-4) may also recognize other types of sorting signal. The sequence is that of AP-4 complex subunit mu-1 from Rattus norvegicus (Rat).